The chain runs to 310 residues: N-acetylmuramic acid 6-phosphate etherase (310 aa).

Residues 64 to 227 (ITARLKSKGR…STSVMIKLGK (164 aa)) form the SIS domain. Glutamate 92 serves as the catalytic Proton donor. Glutamate 123 is an active-site residue.

The protein belongs to the GCKR-like family. MurNAc-6-P etherase subfamily. In terms of assembly, homodimer.

The enzyme catalyses N-acetyl-D-muramate 6-phosphate + H2O = N-acetyl-D-glucosamine 6-phosphate + (R)-lactate. It participates in amino-sugar metabolism; N-acetylmuramate degradation. In terms of biological role, specifically catalyzes the cleavage of the D-lactyl ether substituent of MurNAc 6-phosphate, producing GlcNAc 6-phosphate and D-lactate. The chain is N-acetylmuramic acid 6-phosphate etherase from Prochlorococcus marinus (strain NATL1A).